A 230-amino-acid polypeptide reads, in one-letter code: C-methyltransferase CouO (230 aa).

The protein belongs to the methyltransferase superfamily.

It functions in the pathway antibiotic biosynthesis. Functionally, mediates C-methylation at the 8-position of the aminocoumarin moieties in coumermycin A1 in the biosynthetic pathway of coumermycin antibiotic. Active on both mono- and bis-amides for mono- and di-C-methylation adjacent to the phenolic hydroxyl before it is glycosylated by CouM. In Streptomyces rishiriensis, this protein is C-methyltransferase CouO (couO).